We begin with the raw amino-acid sequence, 209 residues long: Large ribosomal subunit protein uL3 (209 aa).

An N5-methylglutamine modification is found at Q150.

Belongs to the universal ribosomal protein uL3 family. As to quaternary structure, part of the 50S ribosomal subunit. Forms a cluster with proteins L14 and L19. Post-translationally, methylated by PrmB.

Its function is as follows. One of the primary rRNA binding proteins, it binds directly near the 3'-end of the 23S rRNA, where it nucleates assembly of the 50S subunit. This Salmonella paratyphi C (strain RKS4594) protein is Large ribosomal subunit protein uL3.